The chain runs to 1299 residues: MSSLSTGGGAGGSSGGPGGADAAAAPAAGQATVTATGNMEPAMVPRTANLLACKQWWRVCFLYGDQQKYYRQLYSKAAAQRLADANQEPDNARDREYDTVDCDLIAGQLDAVEDADDGIDLGDHSSTPKGGATTAGRPLFPHSSSPRRSKKLLRSLRAHVRGEKLPKNDTTTANESSEVTQRNARVTVLDDPFLFGIDADHLGDLVVRGKRYSTLDATENMARFYAEQEATAQVLEIIEQEEESPEQEAPKPALPPKQKQQRPVPPLPPPPANRVTQDQGTQPAAPQVPLQPLTAGDLQFLNLSLRQRSLPRSMKPFKDAHDISFTFNELDTSAEPEVATGAAQQESNEPISRTPLTQISYLQKIPTLPRHFSPSGQGLATPPALGSGGMGLPSSSSASALYAAQAAAGILPTSPLPLQRHQQYLPPHHQQHPGAGMGPGPGSGAAAGPPLGPQYSPGCSANPKYSNAQLPPPPHHHHQLSPALSTPSPPSLLHHPAGGTSSASAHAPFLGGPHMDMQRQSHSDDDSGCALEEYTWVPPGLRPDQVRLYFSQIPDDKVPYVNSPGEQYRVRQLLHQLPPHDNEVRYCHSLTDEERKELRLFSTQRKRDALGRGNVRQLMSARPCDGCDDLISTGDIAVFATRLGPNASWHPACFACSVCRELLVDLIYFHRDGRMYCGRHHAETLKPRCSACDEIILADECTEAEGRAWHMNHFACHECDKQLGGQRYIMREGKPYCLHCFDAMFAEYCDYCGEAIGVDQGQMSHDGQHWHATDECFSCNTCRCSLLGRAFLPRRGAIYCSIACSKGEPPTPSDSSGTGMYTTPTPPTQRVRPHPQAPLPARIPSSHASSSPPMSPQQQQQHQATFNQAMYQMQSQQMEAAGGLVDQSKSYAASDSDAGVVKDLEHGGHMGGGDLTDFSGGRASSTSQNLSPLNSPGDFQPHFLPKPMELQRDGVYNFNEMSSNLDAAWSAKPTNSYHLQRQLLENPHTASMPELAGKLVAPPAHMQHLSQLHAVSSHQFQQHEYADILHPPPPPPGEIPELPTPNLSVASTALPPELMGSPTHSAGDRSLNTPMSTQSASHAPPHPVSILSGASSSSPMSGEPAKKKGVRFEGIPDTLPRSRSYSGNGAGTSGGGERERDRDKDKEGGGRHGHGHSSRRRRRRKSSSSSSHHRSGSGHRSHSTTRADTYAPAQPLSSSYQGPPSVLQAANLVHESPSRQQREREREREREESEESDVCSTCSSSSSSSEDYMMMYQLPQRRHYGGVRVSYVPNDALAYDRKRKPSELGGDKDKNCIIS.

A compositionally biased stretch (gly residues) spans 1–19; sequence MSSLSTGGGAGGSSGGPGG. Disordered stretches follow at residues 1–24, 115–181, 241–289, 368–396, and 425–527; these read MSSLSTGGGAGGSSGGPGGADAAA, ADDG…EVTQ, EEES…PQVP, LPRHFSPSGQGLATPPALGSGGMGLPSSS, and LPPH…DDDS. The segment covering 145–159 has biased composition (basic residues); the sequence is SPRRSKKLLRSLRAH. Over residues 168-181 the composition is skewed to polar residues; it reads NDTTTANESSEVTQ. Residues 263–272 are compositionally biased toward pro residues; sequence PVPPLPPPPA. Low complexity predominate over residues 425-434; that stretch reads LPPHHQQHPG. Residues 435–445 show a composition bias toward gly residues; that stretch reads AGMGPGPGSGA. A compositionally biased stretch (polar residues) spans 457–469; it reads PGCSANPKYSNAQ. The PET domain maps to 515–623; that stretch reads MDMQRQSHSD…NVRQLMSARP (109 aa). Positions 516-525 are enriched in basic and acidic residues; it reads DMQRQSHSDD. 3 consecutive LIM zinc-binding domains span residues 622–686, 687–747, and 748–810; these read RPCD…ETLK, PRCS…MFAE, and YCDY…GEPP. 3 disordered regions span residues 807 to 865, 902 to 940, and 1026 to 1249; these read GEPP…HQAT, KDLEHGGHMGGGDLTDFSGGRASSTSQNLSPLNSPGDFQ, and ADIL…SSSS. Residues 844-864 are compositionally biased toward low complexity; that stretch reads PSSHASSSPPMSPQQQQQHQA. Polar residues-rich tracts occupy residues 922–934 and 1070–1081; these read RASSTSQNLSPLN and SLNTPMSTQSAS. The span at 1089–1101 shows a compositional bias: low complexity; that stretch reads SILSGASSSSPMS. Basic and acidic residues predominate over residues 1136-1150; the sequence is GERERDRDKDKEGGG. Residues 1151 to 1183 are compositionally biased toward basic residues; that stretch reads RHGHGHSSRRRRRRKSSSSSSHHRSGSGHRSHS. Residues 1216–1231 are compositionally biased toward basic and acidic residues; the sequence is SPSRQQRERERERERE. The span at 1238–1249 shows a compositional bias: low complexity; that stretch reads VCSTCSSSSSSS.

The protein belongs to the prickle / espinas / testin family. Interacts with dsh; PET and LIM domains interact with dsh DEP domain, in wing cells. Interacts with Vang in photoreceptor cells. As to expression, expressed in the wing, leg and eye imaginal disks. Expressed within the photoreceptors of the eye.

The protein localises to the cell membrane. Its function is as follows. Acts in a planar cell polarity (PCP) complex; polarization along the apical/basal axis of epithelial cells. Correct expression of the alternative isoforms is required for PCP signaling in imaginal disks. PCP signaling in the wing disk requires the receptor fz and the cytoplasmic proteins dsh and pk. These act in a feedback loop leading to activation of the jnk cascade and subsequent polarized arrangement of hairs and bristles. Dgo and pk compete with one another for dsh binding, thereby modulating fz dsh activity and ensuring tight control over fz PCP signaling. Vang, stan and pk function together to regulate the establishment of tissue polarity in the adult eye. The protein is Protein prickle of Drosophila melanogaster (Fruit fly).